We begin with the raw amino-acid sequence, 222 residues long: Glutathione S-transferase (222 aa).

The region spanning 3–83 is the GST N-terminal domain; sequence GKPKLHYTRG…YIAGKYNLYG (81 aa). Residues tyrosine 9, arginine 45, 54–55, and 67–68 contribute to the glutathione site; these read QV and QS. The GST C-terminal domain occupies 85 to 208; sequence DLKERAWIDM…QPGSQRKPPL (124 aa).

The protein belongs to the GST superfamily. Alpha family. Homodimer.

The protein resides in the cytoplasm. The catalysed reaction is RX + glutathione = an S-substituted glutathione + a halide anion + H(+). Its function is as follows. Conjugation of reduced glutathione to a wide number of exogenous and endogenous hydrophobic electrophiles. The polypeptide is Glutathione S-transferase (Gallus gallus (Chicken)).